The primary structure comprises 228 residues: Tungstate uptake system permease protein TupB (228 aa).

The next 5 membrane-spanning stretches (helical) occupy residues 25–45 (IIFL…AVSI), 65–85 (VLYS…AIGL), 102–122 (AMII…TYSL), 144–164 (VIIL…VTTF), and 203–223 (MAIA…AVIY). In terms of domain architecture, ABC transmembrane type-1 spans 26–222 (IFLSVFVSST…MISFAINAVI (197 aa)).

The protein belongs to the binding-protein-dependent transport system permease family. As to quaternary structure, the complex is composed of two ATP-binding proteins (TupC), two transmembrane proteins (TupB) and a solute-binding protein (TupA).

Its subcellular location is the cell membrane. Part of an ABC transporter complex involved in tungstate uptake. Probably responsible for the translocation of the substrate across the membrane. The sequence is that of Tungstate uptake system permease protein TupB from Peptoclostridium acidaminophilum (Eubacterium acidaminophilum).